Consider the following 539-residue polypeptide: Membrane protein insertase YidC (539 aa).

The next 5 helical transmembrane spans lie at 6–26 (TLLVLLLALVSFLLFQQWQVA), 341–361 (SVIQSFVGNWGVAIICLTFIV), 416–436 (LGGCLPLILQMPIFIALYWAL), 454–474 (LSAQDPYFILPLLMGGSMFLI), and 495–515 (PVMFTFFFLWFPSGLVLYWLV).

This sequence belongs to the OXA1/ALB3/YidC family. Type 1 subfamily. In terms of assembly, interacts with the Sec translocase complex via SecD. Specifically interacts with transmembrane segments of nascent integral membrane proteins during membrane integration.

It is found in the cell inner membrane. Functionally, required for the insertion and/or proper folding and/or complex formation of integral membrane proteins into the membrane. Involved in integration of membrane proteins that insert both dependently and independently of the Sec translocase complex, as well as at least some lipoproteins. Aids folding of multispanning membrane proteins. This is Membrane protein insertase YidC from Vibrio vulnificus (strain CMCP6).